A 213-amino-acid polypeptide reads, in one-letter code: Pyridoxine/pyridoxamine 5'-phosphate oxidase (213 aa).

FMN is bound by residues Arg60–Lys65, Tyr75–Ser76, Lys82, and Gln104. Substrate is bound at residue Lys65. Residues Tyr122 and Arg126 each coordinate substrate. Residues Gln139–Ser140 and Trp184 each bind FMN. Substrate is bound at residue Arg190–His192. Arg194 serves as a coordination point for FMN.

This sequence belongs to the pyridoxamine 5'-phosphate oxidase family. As to quaternary structure, homodimer. Requires FMN as cofactor.

The catalysed reaction is pyridoxamine 5'-phosphate + O2 + H2O = pyridoxal 5'-phosphate + H2O2 + NH4(+). The enzyme catalyses pyridoxine 5'-phosphate + O2 = pyridoxal 5'-phosphate + H2O2. Its pathway is cofactor metabolism; pyridoxal 5'-phosphate salvage; pyridoxal 5'-phosphate from pyridoxamine 5'-phosphate: step 1/1. It functions in the pathway cofactor metabolism; pyridoxal 5'-phosphate salvage; pyridoxal 5'-phosphate from pyridoxine 5'-phosphate: step 1/1. Catalyzes the oxidation of either pyridoxine 5'-phosphate (PNP) or pyridoxamine 5'-phosphate (PMP) into pyridoxal 5'-phosphate (PLP). The sequence is that of Pyridoxine/pyridoxamine 5'-phosphate oxidase from Rhodopseudomonas palustris (strain BisA53).